The chain runs to 401 residues: Coenzyme A biosynthesis bifunctional protein CoaBC (401 aa).

The segment at 1–190 (MQTLAGKKIL…FQPKPLQDKS (190 aa)) is phosphopantothenoylcysteine decarboxylase. Cysteine 159 serves as the catalytic Proton donor. The tract at residues 191–401 (ILITAGPTRE…LKQIQTLMGH (211 aa)) is phosphopantothenate--cysteine ligase. CTP-binding positions include aspartate 279, lysine 289, 307 to 310 (PDIV), phenylalanine 326, lysine 340, and lysine 344.

The protein in the N-terminal section; belongs to the HFCD (homo-oligomeric flavin containing Cys decarboxylase) superfamily. In the C-terminal section; belongs to the PPC synthetase family. The cofactor is Mg(2+). FMN is required as a cofactor.

The catalysed reaction is N-[(R)-4-phosphopantothenoyl]-L-cysteine + H(+) = (R)-4'-phosphopantetheine + CO2. It carries out the reaction (R)-4'-phosphopantothenate + L-cysteine + CTP = N-[(R)-4-phosphopantothenoyl]-L-cysteine + CMP + diphosphate + H(+). Its pathway is cofactor biosynthesis; coenzyme A biosynthesis; CoA from (R)-pantothenate: step 2/5. The protein operates within cofactor biosynthesis; coenzyme A biosynthesis; CoA from (R)-pantothenate: step 3/5. Catalyzes two sequential steps in the biosynthesis of coenzyme A. In the first step cysteine is conjugated to 4'-phosphopantothenate to form 4-phosphopantothenoylcysteine. In the second step the latter compound is decarboxylated to form 4'-phosphopantotheine. The polypeptide is Coenzyme A biosynthesis bifunctional protein CoaBC (Vibrio vulnificus (strain YJ016)).